A 552-amino-acid chain; its full sequence is Chaperonin GroEL (552 aa).

ATP contacts are provided by residues 30-33, lysine 51, 87-91, glycine 415, and aspartate 496; these read TLGP and DGTTT.

It belongs to the chaperonin (HSP60) family. As to quaternary structure, forms a cylinder of 14 subunits composed of two heptameric rings stacked back-to-back. Interacts with the co-chaperonin GroES.

It is found in the cytoplasm. The catalysed reaction is ATP + H2O + a folded polypeptide = ADP + phosphate + an unfolded polypeptide.. Functionally, together with its co-chaperonin GroES, plays an essential role in assisting protein folding. The GroEL-GroES system forms a nano-cage that allows encapsulation of the non-native substrate proteins and provides a physical environment optimized to promote and accelerate protein folding. The polypeptide is Chaperonin GroEL (Paramagnetospirillum magneticum (strain ATCC 700264 / AMB-1) (Magnetospirillum magneticum)).